A 158-amino-acid chain; its full sequence is Endoribonuclease YbeY (158 aa).

Residues H114, H118, and H124 each contribute to the Zn(2+) site.

This sequence belongs to the endoribonuclease YbeY family. Requires Zn(2+) as cofactor.

The protein localises to the cytoplasm. Single strand-specific metallo-endoribonuclease involved in late-stage 70S ribosome quality control and in maturation of the 3' terminus of the 16S rRNA. This is Endoribonuclease YbeY from Pasteurella multocida (strain Pm70).